Here is a 231-residue protein sequence, read N- to C-terminus: MAAAEMERTTSFDAAEKLKAADAGGGEVDDELEEGEIVEESNDTASYLGKEITVKHPLEHSWTFWFDSPIAKSRQTAWGSSLRNVYTFSTVEDFWGAYNNIHHPSKLVMGADFHCFKHKIEPKWEDPVCANGGTWKMSFLKGKSDTSWLYTLLAMIGHQFDHGDEICGAVVSVRSKGEKIALWTKNAANETAQVSIGKQWKQFLDHSDSVGFIFHDDAKRLDRSAKNRYTV.

Residues 1–20 show a composition bias toward basic and acidic residues; the sequence is MAAAEMERTTSFDAAEKLKA. Positions 1–36 are disordered; the sequence is MAAAEMERTTSFDAAEKLKAADAGGGEVDDELEEGE. Residues 27-36 show a composition bias toward acidic residues; sequence EVDDELEEGE. EIF4G-binding stretches follow at residues 56–59 and 66–102; these read HPLE and FDSP…NNIH. MRNA contacts are provided by residues 74–79, Lys106, and 124–125; these read RQTAWG and WE. Cysteines 129 and 167 form a disulfide. The interval 150 to 159 is EIF4G-binding; that stretch reads YTLLAMIGHQ. Residues 174 to 179 and 219 to 223 contribute to the mRNA site; these read RSKGEK and KRLDR.

Belongs to the eukaryotic initiation factor 4E family. EIF4F is a multi-subunit complex, the composition of which varies with external and internal environmental conditions. It is composed of at least EIF4A, EIF4E and EIF4G. EIF4E is also known to interact with other partners. In higher plants two isoforms of EIF4F have been identified, named isoform EIF4F and isoform EIF(iso)4F. Isoform EIF4F has subunits p220 and p26, whereas isoform EIF(iso)4F has subunits p82 and p28. In terms of assembly, (Microbial infection) Interacts with viral genome-linked protein (VPg); this interaction is possible in susceptible hosts but impaired in resistant plants. According to the redox status, the Cys-129-Cys-167 disulfide bridge may have a role in regulating protein function by affecting its ability to bind capped mRNA.

Its subcellular location is the nucleus. It localises to the cytoplasm. In terms of biological role, component of the protein complex eIF4F, which is involved in the recognition of the mRNA cap, ATP-dependent unwinding of 5'-terminal secondary structure and recruitment of mRNA to the ribosome. Recognizes and binds the 7-methylguanosine-containing mRNA cap during an early step in the initiation of protein synthesis and facilitates ribosome binding by inducing the unwinding of the mRNAs secondary structures. Key component of recessive resistance to potyviruses. Its function is as follows. (Microbial infection) Susceptibility host factor required for viral infection (e.g. Potato virus Y (PVY)) by recruiting viral RNAs to the host ribosomal complex via an interaction with viral genome-linked protein (VPg). This Solanum tuberosum (Potato) protein is Eukaryotic translation initiation factor 4E allele A.